We begin with the raw amino-acid sequence, 300 residues long: Ribosomal protein L11 methyltransferase (300 aa).

Residues Thr152, Gly173, Asp195, and Asn234 each contribute to the S-adenosyl-L-methionine site.

It belongs to the methyltransferase superfamily. PrmA family.

The protein resides in the cytoplasm. It carries out the reaction L-lysyl-[protein] + 3 S-adenosyl-L-methionine = N(6),N(6),N(6)-trimethyl-L-lysyl-[protein] + 3 S-adenosyl-L-homocysteine + 3 H(+). Methylates ribosomal protein L11. The chain is Ribosomal protein L11 methyltransferase from Burkholderia mallei (strain NCTC 10247).